A 233-amino-acid chain; its full sequence is 2-C-methyl-D-erythritol 4-phosphate cytidylyltransferase (233 aa).

Belongs to the IspD/TarI cytidylyltransferase family. IspD subfamily.

It carries out the reaction 2-C-methyl-D-erythritol 4-phosphate + CTP + H(+) = 4-CDP-2-C-methyl-D-erythritol + diphosphate. Its pathway is isoprenoid biosynthesis; isopentenyl diphosphate biosynthesis via DXP pathway; isopentenyl diphosphate from 1-deoxy-D-xylulose 5-phosphate: step 2/6. Functionally, catalyzes the formation of 4-diphosphocytidyl-2-C-methyl-D-erythritol from CTP and 2-C-methyl-D-erythritol 4-phosphate (MEP). The polypeptide is 2-C-methyl-D-erythritol 4-phosphate cytidylyltransferase (Aromatoleum aromaticum (strain DSM 19018 / LMG 30748 / EbN1) (Azoarcus sp. (strain EbN1))).